Consider the following 310-residue polypeptide: Cysteine synthase (310 aa).

The residue at position 44 (lysine 44) is an N6-(pyridoxal phosphate)lysine. Pyridoxal 5'-phosphate contacts are provided by residues asparagine 74, 179–183, and serine 267; that span reads GTGGT.

This sequence belongs to the cysteine synthase/cystathionine beta-synthase family. Requires pyridoxal 5'-phosphate as cofactor.

It carries out the reaction O-acetyl-L-serine + hydrogen sulfide = L-cysteine + acetate. It functions in the pathway amino-acid biosynthesis; L-cysteine biosynthesis; L-cysteine from L-serine: step 2/2. The sequence is that of Cysteine synthase (cysK) from Neisseria meningitidis serogroup B (strain ATCC BAA-335 / MC58).